Consider the following 907-residue polypeptide: Clumping factor B (907 aa).

The first 44 residues, 1–44, serve as a signal peptide directing secretion; the sequence is MKKRIDYLSNKQNKYSIRRFTVGTTSVIVGATILFGIGNHQAQA. The YSIRK-G/S signaling motif signature appears at 15-26; sequence YSIRRFTVGTTS. Polar residues-rich tracts occupy residues 44–61 and 68–101; these read ASEQ…NASA and MIET…KPMS. Positions 44–191 are disordered; that stretch reads ASEQSNDTTQ…AQGTSKPSVR (148 aa). The interval 45–542 is ligand binding A region; sequence SEQSNDTTQS…GSADGDSAVN (498 aa). A compositionally biased stretch (low complexity) spans 102–119; sequence TQTSNTTTTEPASTNETP. Polar residues predominate over residues 134–189; it reads QDQTVPQEANSQVDNKTTNDANSIATNSELKNPQTLDLPQSSPQTISNAQGTSKPS. Residues 272–276 carry the MIDAS-like motif motif; sequence DYSNS. The interval 530–879 is disordered; it reads YGGGSADGDS…ETGDKSENTN (350 aa). Positions 545-555 are enriched in pro residues; it reads DPTPGPPVDPE. Residues 556–831 show a composition bias toward acidic residues; sequence PSPDPEPEPS…SDSDSDSDSD (276 aa). Polar residues predominate over residues 835–846; that stretch reads RVTPPNNEQKAP. Residues 863–876 show a composition bias toward basic and acidic residues; sequence HKTDALPETGDKSE. Residues 868–872 carry the LPXTG sorting signal motif; sequence LPETG. T871 carries the post-translational modification Pentaglycyl murein peptidoglycan amidated threonine. Residues 872–907 constitute a propeptide, removed by sortase; it reads GDKSENTNATLFGAMMALLGSLLLFRKRKQDHKEKA.

Belongs to the serine-aspartate repeat-containing protein (SDr) family. In terms of processing, proteolytically cleaved by aureolysin (aur). This cleavage leads to the inactivation of ClfB.

It localises to the secreted. Its subcellular location is the cell wall. Cell surface-associated protein implicated in virulence by promoting bacterial attachment to both alpha- and beta-chains of human fibrinogen and inducing the formation of bacterial clumps. The chain is Clumping factor B (clfB) from Staphylococcus aureus (strain MW2).